We begin with the raw amino-acid sequence, 151 residues long: Macrodomain Ter protein (151 aa).

This sequence belongs to the MatP family. In terms of assembly, homodimer.

The protein resides in the cytoplasm. Its function is as follows. Required for spatial organization of the terminus region of the chromosome (Ter macrodomain) during the cell cycle. Prevents early segregation of duplicated Ter macrodomains during cell division. Binds specifically to matS, which is a 13 bp signature motif repeated within the Ter macrodomain. The sequence is that of Macrodomain Ter protein from Cronobacter sakazakii (strain ATCC BAA-894) (Enterobacter sakazakii).